The chain runs to 446 residues: MTENKYLYVETFGCQMNVNDSEKIATLLKDEGYLPTDDPERADLVILNTCSVRAKAEQKVYGHLGRFKGVRSRKKGFLLGVGGCVAQQEGERLLQKVPWLDLVFGTHNLHLLPEIVRAAERGERRAEVGFIDNETRLDLFPETGGEGGVTRFVTVMQGCDNFCSYCIVPYVRGREISRRSSDIIDEVRKSVAEGVKEVTLLGQNVNSYGLKTEGELSFAGLIRRIAEVEGLERIRFTTSHPKDISPELIACFAEVPKLCGHIHLPAQSGSDAVLARMNRGYTRAGYLEKVEALRAARPGIQFTGDMIVGFPGETEEDFQATISLMEEVRYADLFSFIYSPRPETAAAGIRDTVSRKEKQSRLDRLQTLQQQMKRERNISFVGTRQLVLVEGVSKRGDQLYGRIDGNRIVNFAADQSLIGTMAEVTITQDYQNSLLGEIVTDKGDAR.

Residues 5-121 (KYLYVETFGC…LPEIVRAAER (117 aa)) enclose the MTTase N-terminal domain. [4Fe-4S] cluster-binding residues include cysteine 14, cysteine 50, cysteine 84, cysteine 159, cysteine 163, and cysteine 166. The 231-residue stretch at 145–375 (GEGGVTRFVT…QTLQQQMKRE (231 aa)) folds into the Radical SAM core domain. Residues 378-440 (ISFVGTRQLV…QNSLLGEIVT (63 aa)) form the TRAM domain.

It belongs to the methylthiotransferase family. MiaB subfamily. Monomer. Requires [4Fe-4S] cluster as cofactor.

Its subcellular location is the cytoplasm. The enzyme catalyses N(6)-dimethylallyladenosine(37) in tRNA + (sulfur carrier)-SH + AH2 + 2 S-adenosyl-L-methionine = 2-methylsulfanyl-N(6)-dimethylallyladenosine(37) in tRNA + (sulfur carrier)-H + 5'-deoxyadenosine + L-methionine + A + S-adenosyl-L-homocysteine + 2 H(+). Its function is as follows. Catalyzes the methylthiolation of N6-(dimethylallyl)adenosine (i(6)A), leading to the formation of 2-methylthio-N6-(dimethylallyl)adenosine (ms(2)i(6)A) at position 37 in tRNAs that read codons beginning with uridine. The polypeptide is tRNA-2-methylthio-N(6)-dimethylallyladenosine synthase (Geobacter sulfurreducens (strain ATCC 51573 / DSM 12127 / PCA)).